The sequence spans 136 residues: Transport protein particle 20 kDa subunit (136 aa).

It belongs to the TRAPP small subunits family. Sedlin subfamily.

The protein resides in the cytoplasm. The protein localises to the golgi apparatus. It is found in the cis-Golgi network. It localises to the endoplasmic reticulum. Component of the TRAPP I and TRAPP II complexes. TRAPP I plays a key role in the late stages of endoplasmic reticulum to Golgi traffic. TRAPP II seems to play a role in intra-Golgi transport. The sequence is that of Transport protein particle 20 kDa subunit (trs20) from Schizosaccharomyces pombe (strain 972 / ATCC 24843) (Fission yeast).